The following is a 283-amino-acid chain: V-set domain containing T-cell activation inhibitor 1 (283 aa).

A signal peptide spans 1-24; it reads MASLGQIIFWSIINIIIILAGAIA. Ig-like V-type domains lie at 35–144 and 153–241; these read HFIT…ANLE and PEIN…IKVT. Disulfide bonds link Cys56–Cys130 and Cys168–Cys225. Asn216 carries N-linked (GlcNAc...) asparagine glycosylation. A lipid anchor (GPI-anchor amidated glycine) is attached at Gly257. A propeptide spans 258–283 (removed in mature form); it reads PSPCVFSSAFVAGWALLSLSCCLMLR.

It belongs to the immunoglobulin superfamily. BTN/MOG family. In terms of processing, N-glycosylated. Expressed on the surface of professional antigen-presenting cells (at protein level). Widely expressed, including in kidney, liver, lung, pancreas, placenta, prostate, spleen, testis and thymus.

The protein resides in the cell membrane. Functionally, negatively regulates T-cell-mediated immune response by inhibiting T-cell activation, proliferation, cytokine production and development of cytotoxicity. When expressed on the cell surface of tumor macrophages, plays an important role, together with regulatory T-cells (Treg), in the suppression of tumor-associated antigen-specific T-cell immunity. Involved in promoting epithelial cell transformation. This chain is V-set domain containing T-cell activation inhibitor 1, found in Mus musculus (Mouse).